A 473-amino-acid chain; its full sequence is ATP synthase subunit beta (473 aa).

153 to 160 (GGAGVGKT) provides a ligand contact to ATP.

Belongs to the ATPase alpha/beta chains family. In terms of assembly, F-type ATPases have 2 components, CF(1) - the catalytic core - and CF(0) - the membrane proton channel. CF(1) has five subunits: alpha(3), beta(3), gamma(1), delta(1), epsilon(1). CF(0) has three main subunits: a(1), b(2) and c(9-12). The alpha and beta chains form an alternating ring which encloses part of the gamma chain. CF(1) is attached to CF(0) by a central stalk formed by the gamma and epsilon chains, while a peripheral stalk is formed by the delta and b chains.

The protein localises to the cell inner membrane. It carries out the reaction ATP + H2O + 4 H(+)(in) = ADP + phosphate + 5 H(+)(out). Produces ATP from ADP in the presence of a proton gradient across the membrane. The catalytic sites are hosted primarily by the beta subunits. This chain is ATP synthase subunit beta, found in Rickettsia akari (strain Hartford).